Here is a 235-residue protein sequence, read N- to C-terminus: NADH-quinone oxidoreductase subunit C (235 aa).

The protein belongs to the complex I 30 kDa subunit family. As to quaternary structure, NDH-1 is composed of 14 different subunits. Subunits NuoB, C, D, E, F, and G constitute the peripheral sector of the complex.

The protein localises to the cell membrane. The enzyme catalyses a quinone + NADH + 5 H(+)(in) = a quinol + NAD(+) + 4 H(+)(out). In terms of biological role, NDH-1 shuttles electrons from NADH, via FMN and iron-sulfur (Fe-S) centers, to quinones in the respiratory chain. The immediate electron acceptor for the enzyme in this species is believed to be a menaquinone. Couples the redox reaction to proton translocation (for every two electrons transferred, four hydrogen ions are translocated across the cytoplasmic membrane), and thus conserves the redox energy in a proton gradient. The polypeptide is NADH-quinone oxidoreductase subunit C (Mycolicibacterium paratuberculosis (strain ATCC BAA-968 / K-10) (Mycobacterium paratuberculosis)).